A 652-amino-acid polypeptide reads, in one-letter code: MSSVSASTERKHIKFTPIQSFVESSFFTKLSELKLDEFKLDSTKKEIKGFLTHPKRLNKFNDYPTINFDYSSFDKGPDVNEDNNISWKGYIYNVNTIEEFKDIDKQAILKRWGTEIYNEIQDGSVDLSYECFNKVHVLAFCDLKKYKFYYWFAFPTLHSPWNIIGADGDSLKKFIPSIKEFVETSKFVQFFQINDGNIIERVSEFQESKIFVFIDTCLSQACTPSVQLKNYLYVLARKGFENIDLIIYRNNGNSFYWKLQLDKDKLGINEVPRISGWERLSNGKLGPRLADLGSLIDPQELAKQAVDLNLKLMKWRIAPNLDLDIIKNQRVLLLGAGTLGSYVSRALMGWGVRNITFVDNGRISYSNPVRQPLFSFKDCFSDEGQGEWKAIRAANTLKEIFPDVQSKGYNLEVPMIGHPVNNETKQKSSFDKLSDLFDDHDVVFLLMDSRESRWLPTVLGLAKNKIVLNAALGFDSFLVMRHGNISNANNDDTRVGCYYCNDVVAPNDSLSDRTLDQMCTVTRPGVALMASSLAVELFISMLQHPNKQYAEPGPSNNLILGEVPHQIRGFLHNYSQSKLQTPNYKHCSACSKYVIDKFNELGWEFVKNCLNDVTYLEETCGLLKVQQEADLASSELLKDLELSDDDDSEWLD.

The short motif at 335-340 (GAGTLG) is the GXGXXG motif element. Catalysis depends on Cys519, which acts as the Glycyl thioester intermediate.

It belongs to the ATG7 family. Homodimer.

It localises to the cytoplasm. The protein localises to the preautophagosomal structure. E1-like activating enzyme involved in the 2 ubiquitin-like systems required for cytoplasm to vacuole transport (Cvt) and autophagy. Activates ATG12 for its conjugation with ATG5 and ATG8 for its conjugation with phosphatidylethanolamine. Both systems are needed for the ATG8 association to Cvt vesicles and autophagosomes membranes. Autophagy is essential for maintenance of amino acid levels and protein synthesis under nitrogen starvation. Required for selective autophagic degradation of the nucleus (nucleophagy) as well as for mitophagy which contributes to regulate mitochondrial quantity and quality by eliminating the mitochondria to a basal level to fulfill cellular energy requirements and preventing excess ROS production. Plays a role in the regulation of filamentous growth and chronological longevity. This chain is Ubiquitin-like modifier-activating enzyme ATG7 (ATG7), found in Debaryomyces hansenii (strain ATCC 36239 / CBS 767 / BCRC 21394 / JCM 1990 / NBRC 0083 / IGC 2968) (Yeast).